A 482-amino-acid chain; its full sequence is Adenylosuccinate lyase (482 aa).

Substrate-binding positions include 14–15, 82–84, and 108–109; these read RY, RHD, and TS. Residue histidine 156 is the Proton donor/acceptor of the active site. A Glycyl lysine isopeptide (Lys-Gly) (interchain with G-Cter in ubiquitin) cross-link involves residue lysine 196. Residue glutamine 238 participates in substrate binding. Serine 286 serves as the catalytic Proton donor/acceptor. The substrate site is built by arginine 300, arginine 326, serine 331, and arginine 335.

Belongs to the lyase 1 family. Adenylosuccinate lyase subfamily. As to quaternary structure, homotetramer. Residues from neighboring subunits contribute catalytic and substrate-binding residues to each active site.

The enzyme catalyses N(6)-(1,2-dicarboxyethyl)-AMP = fumarate + AMP. It carries out the reaction (2S)-2-[5-amino-1-(5-phospho-beta-D-ribosyl)imidazole-4-carboxamido]succinate = 5-amino-1-(5-phospho-beta-D-ribosyl)imidazole-4-carboxamide + fumarate. It participates in purine metabolism; AMP biosynthesis via de novo pathway; AMP from IMP: step 2/2. Its pathway is purine metabolism; IMP biosynthesis via de novo pathway; 5-amino-1-(5-phospho-D-ribosyl)imidazole-4-carboxamide from 5-amino-1-(5-phospho-D-ribosyl)imidazole-4-carboxylate: step 2/2. The chain is Adenylosuccinate lyase (ADE13) from Saccharomyces cerevisiae (strain ATCC 204508 / S288c) (Baker's yeast).